A 96-amino-acid chain; its full sequence is Co-chaperonin GroES (96 aa).

This sequence belongs to the GroES chaperonin family. Heptamer of 7 subunits arranged in a ring. Interacts with the chaperonin GroEL.

The protein localises to the cytoplasm. Its function is as follows. Together with the chaperonin GroEL, plays an essential role in assisting protein folding. The GroEL-GroES system forms a nano-cage that allows encapsulation of the non-native substrate proteins and provides a physical environment optimized to promote and accelerate protein folding. GroES binds to the apical surface of the GroEL ring, thereby capping the opening of the GroEL channel. This is Co-chaperonin GroES from Acinetobacter baylyi (strain ATCC 33305 / BD413 / ADP1).